The sequence spans 387 residues: 3-ketoacyl-CoA thiolase (387 aa).

The active-site Acyl-thioester intermediate is the cysteine 91. Residues histidine 343 and cysteine 373 each act as proton acceptor in the active site.

The protein belongs to the thiolase-like superfamily. Thiolase family. Heterotetramer of two alpha chains (FadB) and two beta chains (FadA).

Its subcellular location is the cytoplasm. The catalysed reaction is an acyl-CoA + acetyl-CoA = a 3-oxoacyl-CoA + CoA. It participates in lipid metabolism; fatty acid beta-oxidation. Functionally, catalyzes the final step of fatty acid oxidation in which acetyl-CoA is released and the CoA ester of a fatty acid two carbons shorter is formed. This is 3-ketoacyl-CoA thiolase from Escherichia fergusonii (strain ATCC 35469 / DSM 13698 / CCUG 18766 / IAM 14443 / JCM 21226 / LMG 7866 / NBRC 102419 / NCTC 12128 / CDC 0568-73).